The following is a 775-amino-acid chain: Glutamine--tRNA ligase (775 aa).

At Ala2 the chain carries N-acetylalanine. Ser70 carries the phosphoserine modification. The 'HIGH' region motif lies at 270–280 (PEPNGILHIGH). Residues 271 to 273 (EPN) and 277 to 283 (HIGHAKA) each bind ATP. Asp303 contributes to the L-glutamine binding site. Lys309 carries the N6-acetyllysine modification. Tyr438 serves as a coordination point for L-glutamine. ATP is bound by residues Thr457, 486-487 (RL), and 494-496 (VSK). Residues 493–497 (VVSKR) carry the 'KMSKS' region motif. Ser495 bears the Phosphoserine mark.

This sequence belongs to the class-I aminoacyl-tRNA synthetase family. As to quaternary structure, monomer. Part of a multisubunit complex that groups tRNA ligases for Arg (RARS1), Asp (DARS1), Gln (QARS1), Ile (IARS1), Leu (LARS1), Lys (KARS1), Met (MARS1) the bifunctional ligase for Glu and Pro (EPRS1) and the auxiliary subunits AIMP1/p43, AIMP2/p38 and EEF1E1/p18. Interacts with RARS1. Part of a complex composed of RARS1, QARS1 and AIMP1.

It localises to the cytoplasm. The protein localises to the cytosol. It carries out the reaction tRNA(Gln) + L-glutamine + ATP = L-glutaminyl-tRNA(Gln) + AMP + diphosphate. In terms of biological role, glutamine--tRNA ligase. Plays a critical role in brain development. The chain is Glutamine--tRNA ligase (QARS1) from Bos taurus (Bovine).